We begin with the raw amino-acid sequence, 451 residues long: Eukaryotic translation initiation factor 3 subunit E (451 aa).

Residues 245-425 (PFFNHEPARD…GTVVMNHPPS (181 aa)) form the PCI domain.

The protein belongs to the eIF-3 subunit E family. As to quaternary structure, component of the eukaryotic translation initiation factor 3 (eIF-3) complex.

The protein resides in the cytoplasm. Component of the eukaryotic translation initiation factor 3 (eIF-3) complex, which is involved in protein synthesis of a specialized repertoire of mRNAs and, together with other initiation factors, stimulates binding of mRNA and methionyl-tRNAi to the 40S ribosome. The eIF-3 complex specifically targets and initiates translation of a subset of mRNAs involved in cell proliferation. The protein is Eukaryotic translation initiation factor 3 subunit E (int6) of Sclerotinia sclerotiorum (strain ATCC 18683 / 1980 / Ss-1) (White mold).